A 285-amino-acid chain; its full sequence is Putative sugar uptake protein lmo0424 (285 aa).

Helical transmembrane passes span 2–21 (SIYL…PIIA), 31–50 (QLLG…FWIL), 55–77 (TVLS…LLQF), 111–133 (WQTV…GVVM), 146–168 (SVSF…YVVT), 172–194 (FDVT…AIGI), 207–229 (VTFN…LATA), 233–255 (VATS…ILIF), and 262–284 (LEWT…LSLL).

The protein belongs to the GRP transporter (TC 2.A.7.5) family.

Its subcellular location is the cell membrane. This chain is Putative sugar uptake protein lmo0424, found in Listeria monocytogenes serovar 1/2a (strain ATCC BAA-679 / EGD-e).